A 543-amino-acid polypeptide reads, in one-letter code: Mitochondrial distribution and morphology protein 34 (543 aa).

Residues 1–202 form the SMP-LTD domain; the sequence is MSFNVNWNSL…LPTLLHKVSL (202 aa). Positions 519–543 are disordered; that stretch reads AFSHNDPSITPFELPPPPYHQLSRA.

Belongs to the MDM34 family. As to quaternary structure, component of the ER-mitochondria encounter structure (ERMES) or MDM complex, composed of MMM1, MDM10, MDM12 and MDM34.

The protein resides in the mitochondrion outer membrane. Component of the ERMES/MDM complex, which serves as a molecular tether to connect the endoplasmic reticulum (ER) and mitochondria. Components of this complex are involved in the control of mitochondrial shape and protein biogenesis, and function in nonvesicular lipid trafficking between the ER and mitochondria. MDM34 is required for the interaction of the ER-resident membrane protein MMM1 and the outer mitochondrial membrane-resident beta-barrel protein MDM10. In Clavispora lusitaniae (strain ATCC 42720) (Yeast), this protein is Mitochondrial distribution and morphology protein 34.